Here is a 175-residue protein sequence, read N- to C-terminus: MSTDTMYFNSSRLLPSAGRNKTNNLIKQKTRNNRARGNAAKNANNNNYITDIPPPQTLPNGQKPNFGHSSNKKPSFNQKKHSPPSSPSSTTTLGKKNRQNNKETPRQNNKDDTRLLSQNLKNLLLNQKQSPHGSQGIIPMGCNGSAKKLSHSYAGSTFATNGPREAKNLPKPSFL.

The span at 1–27 (MSTDTMYFNSSRLLPSAGRNKTNNLIK) shows a compositional bias: polar residues. Disordered stretches follow at residues 1 to 113 (MSTD…KDDT) and 155 to 175 (GSTFATNGPREAKNLPKPSFL). Ser2 is modified (N-acetylserine). Positions 35-47 (ARGNAAKNANNNN) are enriched in low complexity. The span at 58-77 (LPNGQKPNFGHSSNKKPSFN) shows a compositional bias: polar residues. Phosphoserine is present on Ser82. Positions 100 to 113 (NNKETPRQNNKDDT) are enriched in basic and acidic residues.

Belongs to the EDC family.

The protein localises to the cytoplasm. MRNA-binding protein which stimulates mRNA decapping by DCP1 and DCP2. Involved in the regulation of expression of multiple genes involved in glycolysis and gluconeogenesis. In Saccharomyces cerevisiae (strain ATCC 204508 / S288c) (Baker's yeast), this protein is Enhancer of mRNA-decapping protein 1 (EDC1).